The chain runs to 119 residues: Holo-[acyl-carrier-protein] synthase (119 aa).

Residues Asp-5 and Glu-51 each contribute to the Mg(2+) site.

It belongs to the P-Pant transferase superfamily. AcpS family. Requires Mg(2+) as cofactor.

Its subcellular location is the cytoplasm. The catalysed reaction is apo-[ACP] + CoA = holo-[ACP] + adenosine 3',5'-bisphosphate + H(+). Its function is as follows. Transfers the 4'-phosphopantetheine moiety from coenzyme A to a Ser of acyl-carrier-protein. This chain is Holo-[acyl-carrier-protein] synthase, found in Helicobacter pylori (strain ATCC 700392 / 26695) (Campylobacter pylori).